We begin with the raw amino-acid sequence, 218 residues long: Glutathione S-transferase Mu 4 (218 aa).

The GST N-terminal domain maps to 2–88 (SMTLGYWDIR…YIARKHNLCG (87 aa)). Residues 7–8 (YW), 46–50 (WLNEK), 59–60 (NL), and 72–73 (QS) each bind glutathione. Residues 90–208 (TEEEKIRVDI…KSSRFLPKPL (119 aa)) form the GST C-terminal domain. Substrate is bound at residue tyrosine 116.

It belongs to the GST superfamily. Mu family. In terms of assembly, homodimer. Expressed in a wide variety of tissues.

The protein resides in the cytoplasm. The enzyme catalyses RX + glutathione = an S-substituted glutathione + a halide anion + H(+). The catalysed reaction is 1-chloro-2,4-dinitrobenzene + glutathione = 2,4-dinitrophenyl-S-glutathione + chloride + H(+). It carries out the reaction (13S,14S)-epoxy-(4Z,7Z,9E,11E,16Z,19Z)-docosahexaenoate + glutathione = (13R)-S-glutathionyl-(14S)-hydroxy-(4Z,7Z,9E,11E,16Z,19Z)-docosahexaenoate. It catalyses the reaction leukotriene C4 = leukotriene A4 + glutathione. Its function is as follows. Conjugation of reduced glutathione to a wide number of exogenous and endogenous hydrophobic electrophiles. Catalyzes the conjugation of leukotriene A4 with reduced glutathione (GSH) to form leukotriene C4. Can also catalyze the transfer of a glutathionyl group from glutathione (GSH) to 13(S),14(S)-epoxy-docosahexaenoic acid to form maresin conjugate in tissue regeneration 1 (MCTR1), a bioactive lipid mediator that possess potent anti-inflammatory and proresolving actions. The chain is Glutathione S-transferase Mu 4 (GSTM4) from Homo sapiens (Human).